The chain runs to 433 residues: Enolase (433 aa).

Residue Gln-167 coordinates (2R)-2-phosphoglycerate. Glu-209 serves as the catalytic Proton donor. Asp-246, Glu-291, and Asp-318 together coordinate Mg(2+). The (2R)-2-phosphoglycerate site is built by Lys-343, Arg-372, Ser-373, and Lys-394. Lys-343 acts as the Proton acceptor in catalysis.

The protein belongs to the enolase family. In terms of assembly, component of the RNA degradosome, a multiprotein complex involved in RNA processing and mRNA degradation. It depends on Mg(2+) as a cofactor.

Its subcellular location is the cytoplasm. The protein resides in the secreted. It localises to the cell surface. The enzyme catalyses (2R)-2-phosphoglycerate = phosphoenolpyruvate + H2O. It participates in carbohydrate degradation; glycolysis; pyruvate from D-glyceraldehyde 3-phosphate: step 4/5. Catalyzes the reversible conversion of 2-phosphoglycerate (2-PG) into phosphoenolpyruvate (PEP). It is essential for the degradation of carbohydrates via glycolysis. This chain is Enolase, found in Vibrio vulnificus (strain CMCP6).